The sequence spans 117 residues: MSKIIQQLEAEQMNREVPDFTPGDTVVVQVKVKEGNRERLQAFEGVVIAKRNRGLNSAFTVRKISHGEGVERVFQTYSPAVAEIQVKRRGSVRRAKLYYLRDLTGKAARIKEDIKRG.

The protein belongs to the bacterial ribosomal protein bL19 family.

Its function is as follows. This protein is located at the 30S-50S ribosomal subunit interface and may play a role in the structure and function of the aminoacyl-tRNA binding site. The sequence is that of Large ribosomal subunit protein bL19 from Thioalkalivibrio sulfidiphilus (strain HL-EbGR7).